Here is a 406-residue protein sequence, read N- to C-terminus: GTPase Obg (406 aa).

Residues 1–159 (MRFVDEAVIT…REIRLELKVL (159 aa)) form the Obg domain. The tract at residues 120–143 (GGEGGLGNTHFKSSTNRAPRKCTT) is disordered. The OBG-type G domain occupies 160–333 (ADVGLLGMPN…VVYYLMDQIE (174 aa)). GTP contacts are provided by residues 166–173 (GMPNAGKS), 191–195 (FTTMV), 213–216 (DIPG), 283–286 (NKLD), and 314–316 (SGL). Mg(2+) is bound by residues serine 173 and threonine 193. Positions 381–406 (ESMMDDDDDFDDDEDDGDVESIYVRD) are disordered. Residues 383–399 (MMDDDDDFDDDEDDGDV) are compositionally biased toward acidic residues.

It belongs to the TRAFAC class OBG-HflX-like GTPase superfamily. OBG GTPase family. Monomer. The cofactor is Mg(2+).

The protein localises to the cytoplasm. Functionally, an essential GTPase which binds GTP, GDP and possibly (p)ppGpp with moderate affinity, with high nucleotide exchange rates and a fairly low GTP hydrolysis rate. Plays a role in control of the cell cycle, stress response, ribosome biogenesis and in those bacteria that undergo differentiation, in morphogenesis control. In Acinetobacter baumannii (strain SDF), this protein is GTPase Obg.